The primary structure comprises 379 residues: Chaperone protein DnaJ (379 aa).

The J domain maps to 5–69 (DYYEVLGISK…NKRASYDQFG (65 aa)). The segment at 136–218 (GTTKEISIRK…CHGKGTENKT (83 aa)) adopts a CR-type zinc-finger fold. The Zn(2+) site is built by C149, C152, C166, C169, C192, C195, C206, and C209. 4 CXXCXGXG motif repeats span residues 149–156 (CETCHGDG), 166–173 (CSYCNGAG), 192–199 (CPKCNGSG), and 206–213 (CPTCHGKG).

Belongs to the DnaJ family. As to quaternary structure, homodimer. Requires Zn(2+) as cofactor.

Its subcellular location is the cytoplasm. Participates actively in the response to hyperosmotic and heat shock by preventing the aggregation of stress-denatured proteins and by disaggregating proteins, also in an autonomous, DnaK-independent fashion. Unfolded proteins bind initially to DnaJ; upon interaction with the DnaJ-bound protein, DnaK hydrolyzes its bound ATP, resulting in the formation of a stable complex. GrpE releases ADP from DnaK; ATP binding to DnaK triggers the release of the substrate protein, thus completing the reaction cycle. Several rounds of ATP-dependent interactions between DnaJ, DnaK and GrpE are required for fully efficient folding. Also involved, together with DnaK and GrpE, in the DNA replication of plasmids through activation of initiation proteins. The chain is Chaperone protein DnaJ from Staphylococcus aureus (strain USA300 / TCH1516).